Consider the following 223-residue polypeptide: Putative NAD(P)H nitroreductase SAB2397c (223 aa).

Belongs to the nitroreductase family. It depends on FMN as a cofactor.

The sequence is that of Putative NAD(P)H nitroreductase SAB2397c from Staphylococcus aureus (strain bovine RF122 / ET3-1).